Reading from the N-terminus, the 141-residue chain is Nucleoside diphosphate kinase (141 aa).

6 residues coordinate ATP: Lys11, Phe59, Arg87, Thr93, Arg104, and Asn114. Residue His117 is the Pros-phosphohistidine intermediate of the active site.

It belongs to the NDK family. Homotetramer. It depends on Mg(2+) as a cofactor.

It is found in the cytoplasm. The catalysed reaction is a 2'-deoxyribonucleoside 5'-diphosphate + ATP = a 2'-deoxyribonucleoside 5'-triphosphate + ADP. The enzyme catalyses a ribonucleoside 5'-diphosphate + ATP = a ribonucleoside 5'-triphosphate + ADP. Functionally, major role in the synthesis of nucleoside triphosphates other than ATP. The ATP gamma phosphate is transferred to the NDP beta phosphate via a ping-pong mechanism, using a phosphorylated active-site intermediate. This is Nucleoside diphosphate kinase from Teredinibacter turnerae (strain ATCC 39867 / T7901).